Reading from the N-terminus, the 578-residue chain is Proline--tRNA ligase (578 aa).

The protein belongs to the class-II aminoacyl-tRNA synthetase family. ProS type 1 subfamily. In terms of assembly, homodimer.

The protein resides in the cytoplasm. The enzyme catalyses tRNA(Pro) + L-proline + ATP = L-prolyl-tRNA(Pro) + AMP + diphosphate. Catalyzes the attachment of proline to tRNA(Pro) in a two-step reaction: proline is first activated by ATP to form Pro-AMP and then transferred to the acceptor end of tRNA(Pro). As ProRS can inadvertently accommodate and process non-cognate amino acids such as alanine and cysteine, to avoid such errors it has two additional distinct editing activities against alanine. One activity is designated as 'pretransfer' editing and involves the tRNA(Pro)-independent hydrolysis of activated Ala-AMP. The other activity is designated 'posttransfer' editing and involves deacylation of mischarged Ala-tRNA(Pro). The misacylated Cys-tRNA(Pro) is not edited by ProRS. The polypeptide is Proline--tRNA ligase (Burkholderia ambifaria (strain ATCC BAA-244 / DSM 16087 / CCUG 44356 / LMG 19182 / AMMD) (Burkholderia cepacia (strain AMMD))).